We begin with the raw amino-acid sequence, 271 residues long: MQSNKVHMGHTARKRFGQNFLHDRYVIDQIVAAINPQPGQNLVEIGPGLAALTEPVASQMDKMTVVELDRDLAARLREHPTLKEKLTVIEADAMRFDFGTLMGEGKGPLRIFGNLPYNISTPLIFHLCEFADRVEDMHFMLQKEVVLRLAAGPGSKAYGRLSVMTQYYCQVVPVLEVGPGAFKPAPKVDSAVVRLIPHKNPTIVAKDIRCLNRVCTEGFGQRRKTIRNSFSNFITDAQLTELGIDGNLRPENLSLEQFVMIANWLADQQQA.

S-adenosyl-L-methionine is bound by residues Asn-19, Leu-21, Gly-46, Glu-67, Asp-92, and Asn-114.

Belongs to the class I-like SAM-binding methyltransferase superfamily. rRNA adenine N(6)-methyltransferase family. RsmA subfamily.

The protein localises to the cytoplasm. The catalysed reaction is adenosine(1518)/adenosine(1519) in 16S rRNA + 4 S-adenosyl-L-methionine = N(6)-dimethyladenosine(1518)/N(6)-dimethyladenosine(1519) in 16S rRNA + 4 S-adenosyl-L-homocysteine + 4 H(+). Functionally, specifically dimethylates two adjacent adenosines (A1518 and A1519) in the loop of a conserved hairpin near the 3'-end of 16S rRNA in the 30S particle. May play a critical role in biogenesis of 30S subunits. This is Ribosomal RNA small subunit methyltransferase A from Aeromonas hydrophila subsp. hydrophila (strain ATCC 7966 / DSM 30187 / BCRC 13018 / CCUG 14551 / JCM 1027 / KCTC 2358 / NCIMB 9240 / NCTC 8049).